The following is a 353-amino-acid chain: 3-isopropylmalate dehydrogenase (353 aa).

4 residues coordinate substrate: Arg-97, Arg-107, Arg-135, and Asp-219. Positions 219, 243, and 247 each coordinate Mg(2+).

The protein belongs to the isocitrate and isopropylmalate dehydrogenases family. LeuB type 1 subfamily. Homodimer. Mg(2+) is required as a cofactor. Mn(2+) serves as cofactor.

The protein localises to the cytoplasm. It catalyses the reaction (2R,3S)-3-isopropylmalate + NAD(+) = 4-methyl-2-oxopentanoate + CO2 + NADH. The protein operates within amino-acid biosynthesis; L-leucine biosynthesis; L-leucine from 3-methyl-2-oxobutanoate: step 3/4. Catalyzes the oxidation of 3-carboxy-2-hydroxy-4-methylpentanoate (3-isopropylmalate) to 3-carboxy-4-methyl-2-oxopentanoate. The product decarboxylates to 4-methyl-2 oxopentanoate. This Bacteroides fragilis (strain ATCC 25285 / DSM 2151 / CCUG 4856 / JCM 11019 / LMG 10263 / NCTC 9343 / Onslow / VPI 2553 / EN-2) protein is 3-isopropylmalate dehydrogenase.